The sequence spans 319 residues: Mitochondrial fission regulator 1-like (319 aa).

The interval 1–35 (MASLGAGAEPESVLFGKDGTEACESPEGRRSGRRK) is disordered.

The protein belongs to the MTFR1 family.

It is found in the mitochondrion outer membrane. Its function is as follows. Mitochondrial protein required for adaptation of miochondrial dynamics to metabolic changes. Regulates mitochondrial morphology at steady state and mediates AMPK-dependent stress-induced mitochondrial fragmentation via the control of OPA1 levels. This is Mitochondrial fission regulator 1-like (mtfr1l) from Xenopus tropicalis (Western clawed frog).